Reading from the N-terminus, the 78-residue chain is DNA-directed RNA polymerase subunit Rpo5 (78 aa).

It belongs to the archaeal Rpo5/eukaryotic RPB5 RNA polymerase subunit family. As to quaternary structure, part of the RNA polymerase complex.

Its subcellular location is the cytoplasm. The catalysed reaction is RNA(n) + a ribonucleoside 5'-triphosphate = RNA(n+1) + diphosphate. In terms of biological role, DNA-dependent RNA polymerase (RNAP) catalyzes the transcription of DNA into RNA using the four ribonucleoside triphosphates as substrates. This Methanosarcina mazei (strain ATCC BAA-159 / DSM 3647 / Goe1 / Go1 / JCM 11833 / OCM 88) (Methanosarcina frisia) protein is DNA-directed RNA polymerase subunit Rpo5.